The primary structure comprises 486 residues: MTTPHLDSAQDIDLSRVHLIGIGGAGMSGVARILLARGKTVTGSDAKDSRTLLPLRAVGATIAVGHAAENLELSGELPTVVVTSFAAIPQDNPELVRAREEGIPVIRRSDLLGELLEGSTQVLIAGTHGKTSTTSMSVVAMQAAGMDPSFAIGGQLNKAGTNAHHGTGEVFIAEADESDASLLRYKPNVAVVTNVEPDHLDFFKTPEAYFQVFDDFAGRITPNGKLVVCLNDPHAAELGERSVRKGIKTVGYGTADAVQAHPEVPAMATIVDSQVVAEGTRATINIDGQEVSVILQIPGDHMVLNGAAALLAGYLVGGDVDKLVEGLSDFSGVRRRFEFHGAIEGGKFNGAAIYDDYAHHPTEVTAVLSAARTRVKAAGKGRVIVAFQPHLYSRTMEFQKEFAEALSLADAAVVLEIYGAREQPVDGVSSEIITDAMTIPVVYEPNFSAVPERIAEIAGPNDIVLTMGAGSVTMLAPEILDQLQNN.

126 to 132 (GTHGKTS) is an ATP binding site.

It belongs to the MurCDEF family.

Its subcellular location is the cytoplasm. It catalyses the reaction UDP-N-acetyl-alpha-D-muramate + L-alanine + ATP = UDP-N-acetyl-alpha-D-muramoyl-L-alanine + ADP + phosphate + H(+). Its pathway is cell wall biogenesis; peptidoglycan biosynthesis. Functionally, cell wall formation. In Corynebacterium glutamicum (strain R), this protein is UDP-N-acetylmuramate--L-alanine ligase.